The sequence spans 245 residues: uncharacterized protein (245 aa).

A coiled-coil region spans residues 33–176; sequence QRAAYQQVQA…SSQRDMLTAT (144 aa).

This is an uncharacterized protein from Mycobacterium tuberculosis (strain CDC 1551 / Oshkosh).